Consider the following 149-residue polypeptide: MSATDPTVVLGTIGSDAHAVGITLLDHALREAGFTVHNLGAQTAKTEFATAAADHDADAVLVSSLYGHAQQDCAGLHDQLAAAGVDATTVVGGNLAVGQTDFETVKQRFEEMGFDRVFSAQTGFEAVVDAVKTELDVDERSPTTTTLGA.

A B12-binding domain is found at 5–138 (DPTVVLGTIG…DAVKTELDVD (134 aa)). Adenosylcob(III)alamin contacts are provided by residues 15–19 (SDAHA), histidine 18, 63–65 (SSL), and 94–98 (NLAVG).

This sequence belongs to the methylaspartate mutase GlmS subunit family. As to quaternary structure, heterotetramer composed of 2 epsilon subunits (GlmE) and 2 sigma subunits (GlmS). GlmE exists as a homodimer and GlmS as a monomer. Adenosylcob(III)alamin is required as a cofactor.

It carries out the reaction (2S,3S)-3-methyl-L-aspartate = L-glutamate. Its pathway is amino-acid degradation; L-glutamate degradation via mesaconate pathway; acetate and pyruvate from L-glutamate: step 1/4. Functionally, catalyzes the carbon skeleton rearrangement of L-glutamate to L-threo-3-methylaspartate ((2S,3S)-3-methylaspartate). This is Glutamate mutase sigma subunit from Halobacterium salinarum (strain ATCC 700922 / JCM 11081 / NRC-1) (Halobacterium halobium).